The following is a 246-amino-acid chain: Cell division protein ZapD (246 aa).

Belongs to the ZapD family. As to quaternary structure, interacts with FtsZ.

The protein localises to the cytoplasm. In terms of biological role, cell division factor that enhances FtsZ-ring assembly. Directly interacts with FtsZ and promotes bundling of FtsZ protofilaments, with a reduction in FtsZ GTPase activity. The polypeptide is Cell division protein ZapD (Vibrio vulnificus (strain CMCP6)).